We begin with the raw amino-acid sequence, 502 residues long: MFSETFVPSIFSYKHRLLHLSVLFFIVPYWYSYYNDQHRLSSYSVETAMFLSWERAIVKPGAMFKKAVIGFNCNVDLIVSGVRVVDALNTTCSEGKDQETLETLADLHQTFAHFFQRGAAAERYMSSEDQFNLLVAESEASTRSHHHIGGNAALMADRIAANFPSTEVYLVGPIGPRSQALLHPSVKRTNSTRILKDELHVILEYKQGEILGDWVAPSSSRFITSHDHFSGSMVVMEMFFKAIAQFRPDLVVITGVHLLEFQSKEMRQEKMRLIKRNLLQIPPKVPIHLELGSLADEIFSTDVINKILPYVDSLGINEQELTFLSHIANGPHMEEYPVQAGTVHVHKVVEMLHWLLKTYGRDPTGQIASKTGYRLSRIHFHCLTYHIMVSSGTDWSNLAAGLAAGARIAGRLSCNIGANTMDSELLEIRTPANFVLDKKIEKNYQFEAHNPIASWMREDVLFVFTPVLVCRLPSKTVGIDDAISATGLLYSQFYRLNRPTHW.

Positions 1–32 (MFSETFVPSIFSYKHRLLHLSVLFFIVPYWYS) are cleaved as a signal peptide. One can recognise an ADPK domain in the interval 44–497 (SVETAMFLSW…LLYSQFYRLN (454 aa)). 2 N-linked (GlcNAc...) asparagine glycosylation sites follow: Asn-89 and Asn-190. Residues Glu-290, Glu-320, and Asp-481 each contribute to the Mg(2+) site. The active-site Proton acceptor is Asp-481.

Belongs to the ADP-dependent glucokinase family. As to quaternary structure, monomer. Mg(2+) serves as cofactor.

The protein localises to the secreted. It catalyses the reaction D-glucose + ADP = D-glucose 6-phosphate + AMP + H(+). It participates in carbohydrate degradation; glycolysis. Functionally, catalyzes the phosphorylation of D-glucose to D-glucose 6-phosphate using ADP as the phosphate donor. GDP and CDP can replace ADP, but with reduced efficiency. This is Probable ADP-dependent glucokinase from Caenorhabditis elegans.